A 543-amino-acid polypeptide reads, in one-letter code: MARYIFITGGVVSSLGKGLASAALGALLQARGYKVRLRKLDPYLNLDPGTMSPYQHGEVFVTDDGAETDLDLGHYERFTGRPATKQDNITTGRIYQDILTKERRGDYLGATIQVIPHVTNAIKEFVLSGNDGYDFVLVEIGGTVGDIEGLPFFEAIRQIRNDLPRGDVIYIHLTLLPYIPSAGELKTKPTQHSVKELRSIGIQPDILLCRTDRPIPKEERRKLGLFCNVRETAVIEARDADSIYAVPEAYHAAGLDDEVLAAFAIAAEEPPALERWHKINERIRNPEGAVTIAIVGKYTGMKDAYKSLIEALSHGGIANKVEVKLDWIESEVFENEDPAPFLEHVNGILVPGGFGQRGAEGKIEAARFARERDVPYFGICFGMQMAVIEAARNLAGIAEANSTEFGPTSEPLVGLMTEWLRGNELERRSQAGDLGGTMRLGAYPAALKRGSRVSKVYGDVLEISERHRHRYEVNTAYKDRLEQHGLRFSGMSPDGVLPEIVEYEDHPWFIGVQFHPELKSRPFEPHPLFSSFIEAALVRSRLV.

Residues 1-265 (MARYIFITGG…DDEVLAAFAI (265 aa)) form an amidoligase domain region. Ser-13 contributes to the CTP binding site. Ser-13 is a binding site for UTP. 14–19 (SLGKGL) contacts ATP. Tyr-54 contacts L-glutamine. Asp-71 contributes to the ATP binding site. The Mg(2+) site is built by Asp-71 and Glu-139. CTP contacts are provided by residues 146-148 (DIE), 186-191 (KTKPTQ), and Lys-222. Residues 186-191 (KTKPTQ) and Lys-222 contribute to the UTP site. Residue 238-240 (RDA) participates in ATP binding. The region spanning 291–542 (TIAIVGKYTG…IEAALVRSRL (252 aa)) is the Glutamine amidotransferase type-1 domain. Gly-353 provides a ligand contact to L-glutamine. Residue Cys-380 is the Nucleophile; for glutamine hydrolysis of the active site. L-glutamine contacts are provided by residues 381–384 (FGMQ), Glu-404, and Arg-470. Catalysis depends on residues His-515 and Glu-517.

The protein belongs to the CTP synthase family. As to quaternary structure, homotetramer.

It catalyses the reaction UTP + L-glutamine + ATP + H2O = CTP + L-glutamate + ADP + phosphate + 2 H(+). The enzyme catalyses L-glutamine + H2O = L-glutamate + NH4(+). The catalysed reaction is UTP + NH4(+) + ATP = CTP + ADP + phosphate + 2 H(+). It participates in pyrimidine metabolism; CTP biosynthesis via de novo pathway; CTP from UDP: step 2/2. With respect to regulation, allosterically activated by GTP, when glutamine is the substrate; GTP has no effect on the reaction when ammonia is the substrate. The allosteric effector GTP functions by stabilizing the protein conformation that binds the tetrahedral intermediate(s) formed during glutamine hydrolysis. Inhibited by the product CTP, via allosteric rather than competitive inhibition. Functionally, catalyzes the ATP-dependent amination of UTP to CTP with either L-glutamine or ammonia as the source of nitrogen. Regulates intracellular CTP levels through interactions with the four ribonucleotide triphosphates. The polypeptide is CTP synthase (Rhodopseudomonas palustris (strain BisB5)).